The following is a 527-amino-acid chain: Rhamnogalacturonate lyase A (527 aa).

A signal peptide spans 1–20; it reads MLSKTFLLSSAVLWARVANA. N27 and N46 each carry an N-linked (GlcNAc...) asparagine glycan. 2 disulfide bridges follow: C50–C93 and C184–C193. N-linked (GlcNAc...) asparagine glycosylation occurs at N351.

Belongs to the polysaccharide lyase 4 family.

Its subcellular location is the secreted. The enzyme catalyses Endotype eliminative cleavage of L-alpha-rhamnopyranosyl-(1-&gt;4)-alpha-D-galactopyranosyluronic acid bonds of rhamnogalacturonan I domains in ramified hairy regions of pectin leaving L-rhamnopyranose at the reducing end and 4-deoxy-4,5-unsaturated D-galactopyranosyluronic acid at the non-reducing end.. Functionally, pectinolytic enzymes consist of four classes of enzymes: pectin lyase, polygalacturonase, pectin methylesterase and rhamnogalacturonase. Degrades the rhamnogalacturonan I (RG-I) backbone of pectin. Active against linseed rhamnogalacturonan. The polypeptide is Rhamnogalacturonate lyase A (rglA) (Emericella nidulans (strain FGSC A4 / ATCC 38163 / CBS 112.46 / NRRL 194 / M139) (Aspergillus nidulans)).